A 358-amino-acid polypeptide reads, in one-letter code: Putative inhibitor of apoptosis (358 aa).

2 BIR repeats span residues 4 to 70 (EKDR…CPFL) and 90 to 157 (YAAR…CEYL). Zn(2+) is bound by residues cysteine 127, cysteine 130, histidine 147, and cysteine 154. The 91-residue stretch at 193–283 (EPPNDLSLIR…MLYKHLFVQQ (91 aa)) folds into the CARD domain. Residues 311–346 (CKVCMDKEVSIVFIPCGHLVVCKDCAPSLRKCPICR) form an RING-type zinc finger.

Belongs to the IAP family.

This is Putative inhibitor of apoptosis (PIAP) from Sus scrofa (Pig).